Consider the following 291-residue polypeptide: Pituitary-specific positive transcription factor 1 (291 aa).

Positions 5 to 13 (AFTSADTFI) match the 9aaTAD motif. One can recognise a POU-specific domain in the interval 124–198 (MDSPEIRELE…ILSKWLEEAE (75 aa)). The segment at residues 214–273 (KRKRRTTISIAAKDALERHFGEQNKPSSQEIMRMAEELNLEKEVVRVWFCNRRQREKRVK) is a DNA-binding region (homeobox).

Belongs to the POU transcription factor family. Class-1 subfamily. In terms of assembly, interacts with PITX1. Interacts with LHX3. Interacts with ELK1.

Its subcellular location is the nucleus. In terms of biological role, transcription factor involved in the specification of the lactotrope, somatotrope, and thyrotrope phenotypes in the developing anterior pituitary. Specifically binds to the consensus sequence 5'-TAAAT-3'. Activates growth hormone and prolactin genes. This chain is Pituitary-specific positive transcription factor 1 (POU1F1), found in Homo sapiens (Human).